A 423-amino-acid chain; its full sequence is Amino acid transporter AVT1J (423 aa).

11 consecutive transmembrane segments (helical) span residues 39–59 (CFHGINALSGVGILSVPYALA), 63–83 (WLSLIILFTVAITTFYCAILI), 110–130 (VIVSIFMNLELYLVATSFLIL), 151–171 (FQGKQMFIIMVALIILPSVWL), 186–206 (FASGVILASIFSVGAFEGVGF), 219–239 (VATSVSLYAFCYCAHPVFPTL), 252–272 (VMIICFTICTFIYASVAVLGY), 297–317 (AIWTTLVNPIAKFALMVTPII), 333–355 (ASGFLLSTILVTSNVIVALLLPF), 359–381 (LMSLVGAFLSASASVILPCLCYL), and 390–410 (LGFETLVLIGITLTGIVVVIT).

This sequence belongs to the amino acid/polyamine transporter 2 family. Amino acid/auxin permease (AAAP) (TC 2.A.18.5) subfamily.

It is found in the membrane. The protein is Amino acid transporter AVT1J of Arabidopsis thaliana (Mouse-ear cress).